Consider the following 154-residue polypeptide: Myoglobin (154 aa).

The Globin domain maps to G2–K148. Residue S4 is modified to Phosphoserine. H65 contacts nitrite. H65 contacts O2. T68 is subject to Phosphothreonine. H94 provides a ligand contact to heme b.

In terms of assembly, monomer.

The protein localises to the cytoplasm. It localises to the sarcoplasm. It carries out the reaction Fe(III)-heme b-[protein] + nitric oxide + H2O = Fe(II)-heme b-[protein] + nitrite + 2 H(+). It catalyses the reaction H2O2 + AH2 = A + 2 H2O. Its function is as follows. Monomeric heme protein which primary function is to store oxygen and facilitate its diffusion within muscle tissues. Reversibly binds oxygen through a pentacoordinated heme iron and enables its timely and efficient release as needed during periods of heightened demand. Depending on the oxidative conditions of tissues and cells, and in addition to its ability to bind oxygen, it also has a nitrite reductase activity whereby it regulates the production of bioactive nitric oxide. Under stress conditions, like hypoxia and anoxia, it also protects cells against reactive oxygen species thanks to its pseudoperoxidase activity. The polypeptide is Myoglobin (MB) (Delphinapterus leucas (Beluga whale)).